Consider the following 48-residue polypeptide: Small, acid-soluble spore protein O (48 aa).

Positions 1 to 23 (MVKRKANHVINGMNDAKSQGKGA) are disordered.

Belongs to the SspO family.

It localises to the spore core. The sequence is that of Small, acid-soluble spore protein O from Bacillus velezensis (strain DSM 23117 / BGSC 10A6 / LMG 26770 / FZB42) (Bacillus amyloliquefaciens subsp. plantarum).